The chain runs to 492 residues: V-type proton ATPase subunit B 2 (492 aa).

It belongs to the ATPase alpha/beta chains family. V-ATPase is a heteromultimeric enzyme composed of a peripheral catalytic V1 complex (main components: subunits A, B, C, D, E, and F) attached to an integral membrane V0 proton pore complex (main component: the proteolipid protein).

In terms of biological role, non-catalytic subunit of the peripheral V1 complex of vacuolar ATPase. V-ATPase is responsible for acidifying a variety of intracellular compartments in eukaryotic cells. The polypeptide is V-type proton ATPase subunit B 2 (Acetabularia acetabulum (Mermaid's wine glass)).